Consider the following 381-residue polypeptide: Guanine nucleotide-binding protein G(olf) subunit alpha (381 aa).

A disordered region spans residues 1–25 (MGCLGNSSKTAEDQGVDEKERREAN). A lipid anchor (N-palmitoyl glycine) is attached at glycine 2. Cysteine 3 carries the S-palmitoyl cysteine lipid modification. The segment covering 10-25 (TAEDQGVDEKERREAN) has biased composition (basic and acidic residues). Residues 41-381 (ATHRLLLLGA…RMHLKQYELL (341 aa)) enclose the G-alpha domain. A G1 motif region spans residues 44–57 (RLLLLGAGESGKST). 6 residues coordinate GTP: glutamate 52, serine 53, glycine 54, lysine 55, serine 56, and threonine 57. Serine 56 is a Mg(2+) binding site. Residue threonine 178 is modified to Phosphothreonine. The tract at residues 183–191 (DLLRCRVLT) is G2 motif. The GTP site is built by leucine 185, arginine 186, and threonine 191. Positions 191 and 210 each coordinate Mg(2+). Positions 206 to 215 (FHMFDVGGQR) are G3 motif. GTP is bound by residues glycine 213, asparagine 279, lysine 280, aspartate 282, and alanine 353. A G4 motif region spans residues 275 to 282 (ILFLNKQD). The tract at residues 351–356 (TCAVDT) is G5 motif.

It belongs to the G-alpha family. G(s) subfamily. As to quaternary structure, g proteins are composed of 3 units; alpha, beta and gamma. The alpha chain contains the guanine nucleotide binding site. Interacts with GAS2L2. Interacts (GDP-bound form) with RIC8B (via C-terminus); promoting GNAL folding and association with the plasma membrane.

The protein resides in the cell membrane. The enzyme catalyses GTP + H2O = GDP + phosphate + H(+). Its function is as follows. Guanine nucleotide-binding protein (G protein) involved as transducer in olfactory signal transduction controlled by G protein-coupled receptors (GPCRs). Contains the guanine nucleotide binding site and alternates between an active, GTP-bound state and an inactive, GDP-bound state. Signaling by an activated GPCR promotes GDP release and GTP binding. The alpha subunit has a low GTPase activity that converts bound GTP to GDP, thereby terminating the signal. Both GDP release and GTP hydrolysis are modulated by numerous regulatory proteins. GNAL/G(olf) alpha specifically mediates olfactory signal transduction within the olfactory neuroepithelium and the basal ganglia following GPCRs activation. Acts by promoting the specific activation of adenylyl cyclase ADCY3, resulting in increased levels of the signaling molecule cAMP. The polypeptide is Guanine nucleotide-binding protein G(olf) subunit alpha (Mus musculus (Mouse)).